The chain runs to 430 residues: FAD-dependent monooxygenase asL4 (430 aa).

Residues 11–14 (GGIA), 33–34 (ER), R108, and Y278 contribute to the FAD site.

The protein belongs to the aromatic-ring hydroxylase family. The cofactor is FAD.

Its pathway is secondary metabolite biosynthesis; terpenoid biosynthesis. Flavin-dependent monooxygenase; part of the gene cluster that mediates the biosynthesis of xenovulene A, an unusual meroterpenoid that has potent inhibitory effects on the human gamma-aminobutyrate A (GABAA) benzodiazepine receptor. The first step of xenovulene A biosynthesis is the biosynthesis of 3-methylorcinaldehyde performed by the non-reducing polyketide synthase aspks1. The salicylate hydroxylase asL1 then catalyzes the oxidative dearomatization of 3-methylorcinaldehyde to yield a dearomatized hydroxycyclohexadione. The 2-oxoglutarate-dependent dioxygenase asL3 further catalyzes the oxidative ring expansion to provide the first tropolone metabolite. The cytochrome P450 monooxygenase asR2 allows the synthesis of tropolone hemiacetal. In parallel, a previously unrecognised class of terpene cyclase, asR6, produces alpha-humulene from farnesylpyrophosphate (FPP). The putative Diels-Alderase asR5 probably catalyzes the formation of the tropolone-humulene skeleton by linking humulene and the polyketide moiety. Oxidative-ring contractions catalyzed by asL4 and asL6 then processively remove carbon atoms from the polyketide to yield xenovulene A. The sequence is that of FAD-dependent monooxygenase asL4 from Sarocladium schorii (Acremonium strictum (strain IMI 501407)).